Reading from the N-terminus, the 305-residue chain is Beta-carotene 3-hydroxylase, chloroplastic (305 aa).

The N-terminal 41 residues, 1–41, are a transit peptide targeting the chloroplast; that stretch reads MAFAMSSSLTLFQYQSFGKKPFFSRRRDFAGCSMMNPLVAR. 2 helical membrane-spanning segments follow: residues 98–118 and 129–149; these read YLVA…AAVY and AVPL…AVGM. The Fatty acid hydroxylase domain occupies 146–272; it reads AVGMEYWARW…KFNGVPYGLF (127 aa). Residues 157–162 carry the Histidine box-1 motif; the sequence is HRALWH. The Histidine box-2 motif lies at 169–173; that stretch reads HESHH. 2 helical membrane passes run 184–204 and 207–227; these read DVFA…GFFH and FFSG…MAYM. A Histidine box-3 motif is present at residues 230–235; sequence HDGLVH. Positions 256–260 match the Histidine box-4 motif; that stretch reads HQIHH.

The protein belongs to the sterol desaturase family. In terms of assembly, homodimer. Expressed in flower buds and lips. Detected in roots and leaves.

Its subcellular location is the plastid. It is found in the chloroplast membrane. The enzyme catalyses all-trans-beta-carotene + 4 reduced [2Fe-2S]-[ferredoxin] + 2 O2 + 4 H(+) = all-trans-zeaxanthin + 4 oxidized [2Fe-2S]-[ferredoxin] + 2 H2O. In terms of biological role, nonheme diiron monooxygenase involved in the biosynthesis of xanthophylls. Specific for beta-ring hydroxylations of beta-carotene. Uses ferredoxin as an electron donor. In Oncidium hybrid cultivar (Orchid), this protein is Beta-carotene 3-hydroxylase, chloroplastic (BHY).